Consider the following 166-residue polypeptide: MRLILLSSLLLLGIFLANGHEEDPDGKVLNSLIDTLMHLQKLYANLKYSFLTVHRARSFGSGSERLYVTNKEIKNFEALRQICEQAEGHIPSPQLENQNKAFANVLERHGKEAYLVVGDSANFTNWAAGEPNKAAGTCVKADTHGSWHSASCDDNLLVVCEFYFIL.

Residues 1–19 (MRLILLSSLLLLGIFLANG) form the signal peptide. A C-type lectin domain is found at 46 to 161 (LKYSFLTVHR…CDDNLLVVCE (116 aa)). Disulfide bonds link Cys-83–Cys-160 and Cys-138–Cys-152. The N-linked (GlcNAc...) asparagine glycan is linked to Asn-122.

The protein belongs to the alpha-type phospholipase A2 inhibitor family. Homotrimer; non-covalently linked. Expressed by the liver.

The protein resides in the secreted. This phospholipase A2 inhibitor binds directly phospholipase A2 in the presence or absence of calcium. The polypeptide is Phospholipase A2 inhibitor clone 10 (Bothrops moojeni (Lance-headed viper)).